A 657-amino-acid polypeptide reads, in one-letter code: Threonine--tRNA ligase (657 aa).

One can recognise a TGS domain in the interval 1 to 70 (MSDHKESTGA…NSDAAIEIIT (70 aa)). The tract at residues 253-555 (DHRKLGAELE…LIEHTAGNFP (303 aa)) is catalytic. Zn(2+)-binding residues include Cys351, His402, and His532.

It belongs to the class-II aminoacyl-tRNA synthetase family. As to quaternary structure, homodimer. Zn(2+) serves as cofactor.

The protein resides in the cytoplasm. The enzyme catalyses tRNA(Thr) + L-threonine + ATP = L-threonyl-tRNA(Thr) + AMP + diphosphate + H(+). Functionally, catalyzes the attachment of threonine to tRNA(Thr) in a two-step reaction: L-threonine is first activated by ATP to form Thr-AMP and then transferred to the acceptor end of tRNA(Thr). Also edits incorrectly charged L-seryl-tRNA(Thr). This is Threonine--tRNA ligase from Chlorobium chlorochromatii (strain CaD3).